Reading from the N-terminus, the 64-residue chain is Large ribosomal subunit protein bL35 (64 aa).

Residues 1 to 15 (MPKSKTHSGTAKRFK) are compositionally biased toward basic residues. Residues 1 to 23 (MPKSKTHSGTAKRFKVSGSGKIL) form a disordered region.

Belongs to the bacterial ribosomal protein bL35 family.

The protein is Large ribosomal subunit protein bL35 of Rhodococcus jostii (strain RHA1).